A 330-amino-acid chain; its full sequence is (4-{4-[2-(gamma-L-glutamylamino)ethyl]phenoxymethyl}furan-2-yl)methanamine synthase (330 aa).

It belongs to the MfnF family.

It carries out the reaction gamma-L-glutamyltyramine + [5-(aminomethyl)furan-3-yl]methyl diphosphate = (4-{4-[2-(gamma-L-glutamylamino)ethyl]phenoxymethyl}furan-2-yl)methanamine + diphosphate. Its pathway is cofactor biosynthesis; methanofuran biosynthesis. In terms of biological role, catalyzes the condensation between 5-(aminomethyl)-3-furanmethanol diphosphate (F1-PP) and gamma-glutamyltyramine to produce APMF-Glu. The chain is (4-{4-[2-(gamma-L-glutamylamino)ethyl]phenoxymethyl}furan-2-yl)methanamine synthase from Methanocaldococcus jannaschii (strain ATCC 43067 / DSM 2661 / JAL-1 / JCM 10045 / NBRC 100440) (Methanococcus jannaschii).